The following is a 418-amino-acid chain: Gamma-glutamyl phosphate reductase (418 aa).

This sequence belongs to the gamma-glutamyl phosphate reductase family.

Its subcellular location is the cytoplasm. It carries out the reaction L-glutamate 5-semialdehyde + phosphate + NADP(+) = L-glutamyl 5-phosphate + NADPH + H(+). It participates in amino-acid biosynthesis; L-proline biosynthesis; L-glutamate 5-semialdehyde from L-glutamate: step 2/2. In terms of biological role, catalyzes the NADPH-dependent reduction of L-glutamate 5-phosphate into L-glutamate 5-semialdehyde and phosphate. The product spontaneously undergoes cyclization to form 1-pyrroline-5-carboxylate. In Desulfosudis oleivorans (strain DSM 6200 / JCM 39069 / Hxd3) (Desulfococcus oleovorans), this protein is Gamma-glutamyl phosphate reductase.